We begin with the raw amino-acid sequence, 336 residues long: Poly(A) RNA polymerase cid12 (336 aa).

Residues Asp77 and Asp79 each contribute to the Mg(2+) site. A PAP-associated domain is found at 209 to 263; sequence ALLQKFFYFWGVEWTYELFVLRPLTGQIVPKLQKGWLNEVQPNLLSIEDPIDRNN. Ser325 is subject to Phosphoserine. Thr327 carries the phosphothreonine modification. Position 329 is a phosphoserine (Ser329).

The protein belongs to the DNA polymerase type-B-like family. As to quaternary structure, cid12, hrr1 and rdp1 interact forming the RNA-directed RNA polymerase complex (RDRC). The RDRC complex interacts with the RITS complex via interaction between ago1 and hrr1. Clr4 has a role in mediating this interaction. The cofactor is Mg(2+). Requires Mn(2+) as cofactor.

Its subcellular location is the cytoplasm. It is found in the nucleus. It carries out the reaction RNA(n) + ATP = RNA(n)-3'-adenine ribonucleotide + diphosphate. Its function is as follows. Has a role in the RNA interference (RNAi) pathway which is important for heterochromatin formation and accurate chromosome segregation. A member of the RNA-directed RNA polymerase complex (RDRC) which is involved in the generation of small interfering RNAs (siRNAs) and mediate their association with the RNA-induced transcriptional silencing (RITS) complex. RITS acts as a priming complex for dsRNA synthesis at the site of non-coding centromeric RNA. The polypeptide is Poly(A) RNA polymerase cid12 (cid12) (Schizosaccharomyces pombe (strain 972 / ATCC 24843) (Fission yeast)).